Reading from the N-terminus, the 168-residue chain is Auxin-responsive protein IAA1 (168 aa).

A disordered region spans residues 1-74 (MEVTNGLNLK…NRKNNNNKNV (74 aa)). Positions 14-18 (LRLGL) match the EAR-like (transcriptional repression) motif. Positions 23–34 (EEQQLELSCVRS) are enriched in polar residues. Positions 74-161 (VSYVKVSMDG…SCQKLRIMKG (88 aa)) constitute a PB1 domain.

It belongs to the Aux/IAA family. Homodimers and heterodimers. Interacts with the auxin-responsive protein IAA2. Interacts with TPL. Phosphorylated by phytochrome A in vitro. As to expression, preferentially expressed in stems, leaves and flowers.

It localises to the nucleus. Functionally, aux/IAA proteins are short-lived transcriptional factors that function as repressors of early auxin response genes at low auxin concentrations. Repression is thought to result from the interaction with auxin response factors (ARFs), proteins that bind to the auxin-responsive promoter element (AuxRE). Formation of heterodimers with ARF proteins may alter their ability to modulate early auxin response genes expression. In Arabidopsis thaliana (Mouse-ear cress), this protein is Auxin-responsive protein IAA1 (IAA1).